Consider the following 325-residue polypeptide: Ribosomal RNA small subunit methyltransferase H (325 aa).

S-adenosyl-L-methionine-binding positions include 45 to 47 (GGH), Asp65, Tyr92, Asp113, and Gln120.

Belongs to the methyltransferase superfamily. RsmH family.

The protein resides in the cytoplasm. The enzyme catalyses cytidine(1402) in 16S rRNA + S-adenosyl-L-methionine = N(4)-methylcytidine(1402) in 16S rRNA + S-adenosyl-L-homocysteine + H(+). In terms of biological role, specifically methylates the N4 position of cytidine in position 1402 (C1402) of 16S rRNA. The chain is Ribosomal RNA small subunit methyltransferase H from Oleidesulfovibrio alaskensis (strain ATCC BAA-1058 / DSM 17464 / G20) (Desulfovibrio alaskensis).